Reading from the N-terminus, the 594-residue chain is Alanine--tRNA ligase (594 aa).

4 residues coordinate Zn(2+): histidine 456, histidine 460, cysteine 558, and histidine 562.

The protein belongs to the class-II aminoacyl-tRNA synthetase family. It depends on Zn(2+) as a cofactor.

It is found in the cytoplasm. The enzyme catalyses tRNA(Ala) + L-alanine + ATP = L-alanyl-tRNA(Ala) + AMP + diphosphate. Its function is as follows. Catalyzes the attachment of alanine to tRNA(Ala) in a two-step reaction: alanine is first activated by ATP to form Ala-AMP and then transferred to the acceptor end of tRNA(Ala). Also edits incorrectly charged Ser-tRNA(Ala) and Gly-tRNA(Ala) via its editing domain. The sequence is that of Alanine--tRNA ligase (alaS) from Borreliella afzelii (strain PKo) (Borrelia afzelii).